Consider the following 197-residue polypeptide: Female-specific protein transformer (197 aa).

2 stretches are compositionally biased toward basic and acidic residues: residues 1 to 17 and 24 to 39; these read MKMDADSSGTQHRDSRG and REREYHGRSSERDSRK. 2 disordered regions span residues 1–136 and 158–197; these read MKMD…PKII and GYQRLPRPPPFPPAPYRYRQRPPFIGVPRFGYRNAGRPPY. Composition is skewed to basic residues over residues 58–75 and 84–127; these read RRLRQRAHQSTRRTRSRS and SRHR…RSPH. Pro residues predominate over residues 163 to 172; the sequence is PRPPPFPPAP.

Its subcellular location is the nucleus speckle. In terms of biological role, member of the regulatory pathway controlling female somatic sexual differentiation, regulated by Sxl. Activates dsx female-specific splicing by promoting the formation of a splicing enhancer complex which consists of tra, tra2 and sr proteins. Together with tra-2, plays a role in switching fru splicing from the male-specific pattern to the female-specific pattern through activation of the female-specific fru 5'-splice site. No known function in males. The chain is Female-specific protein transformer (tra) from Drosophila melanogaster (Fruit fly).